Here is a 224-residue protein sequence, read N- to C-terminus: METVASTQVQTLIVRRFGLVSYEPVWRAMQDFTQQRDAETTDEVWLLQHEPVFTQGQAGDAEHVLFPGDIPVVQVDRGGQVTYHGPGQLMVYLLLDLRRLKMGARDLVTMIENTLVDTLAGYGIEAHARKDAPGVYVGDAKIASLGLRIRRGSSFHGLALNVDMDLEPFLRINPCGYQGLRMTQIKEFVPDVSWASVADAWLSQFVRAAGFQSVVEQRGLPGDE.

Positions 38 to 213 (AETTDEVWLL…QFVRAAGFQS (176 aa)) constitute a BPL/LPL catalytic domain. Substrate contacts are provided by residues 77–84 (RGGQVTYH), 144–146 (SLG), and 157–159 (GLA). Cys-175 functions as the Acyl-thioester intermediate in the catalytic mechanism.

Belongs to the LipB family.

The protein localises to the cytoplasm. It catalyses the reaction octanoyl-[ACP] + L-lysyl-[protein] = N(6)-octanoyl-L-lysyl-[protein] + holo-[ACP] + H(+). Its pathway is protein modification; protein lipoylation via endogenous pathway; protein N(6)-(lipoyl)lysine from octanoyl-[acyl-carrier-protein]: step 1/2. Its function is as follows. Catalyzes the transfer of endogenously produced octanoic acid from octanoyl-acyl-carrier-protein onto the lipoyl domains of lipoate-dependent enzymes. Lipoyl-ACP can also act as a substrate although octanoyl-ACP is likely to be the physiological substrate. The polypeptide is Octanoyltransferase (Hahella chejuensis (strain KCTC 2396)).